A 126-amino-acid chain; its full sequence is 13 kDa ribonucleoprotein-associated protein (126 aa).

The protein belongs to the eukaryotic ribosomal protein eL8 family. In terms of assembly, component of the U3 snoRNP particle. Binds to the C'/D and B/C motifs in U3 snoRNA. Component of the 25S U4/U6.U5 tri-snRNP particle, a subcomplex of the spliceosome. Binds to the 5' stem-loop of U4 snRNA.

It is found in the nucleus. Its subcellular location is the nucleolus. Functionally, common component of the spliceosome and rRNA processing machinery. In association with the spliceosomal U4/U6.U5 tri-snRNP particle, required for splicing of pre-mRNA. In association with box C/D snoRNPs, required for processing of pre-ribosomal RNA (rRNA) and site-specific 2'-O-methylation of substrate RNAs. Essential for the accumulation and stability of U4 snRNA, U6 snRNA, and box C/D snoRNAs. In Candida glabrata (strain ATCC 2001 / BCRC 20586 / JCM 3761 / NBRC 0622 / NRRL Y-65 / CBS 138) (Yeast), this protein is 13 kDa ribonucleoprotein-associated protein (SNU13).